The chain runs to 243 residues: I/6 autoantigen (243 aa).

The 36-residue stretch at 110–145 folds into the EF-hand domain; sequence LSVEEVDALFNALDSDNRGYVSVDEFMDALYGEEGR. Positions 166–243 are disordered; it reads PSWRMRPTPK…PPKQKAGCGC (78 aa). The span at 176 to 196 shows a compositional bias: basic residues; sequence PTRKLRQKRKREQGQKRKQGQ. Repeat copies occupy residues 181–188, 189–196, 197–204, 205–212, 213–220, and 221–228. A 6 X 8 AA tandem repeats region spans residues 181–228; sequence RQKRKREQGQKRKQGQRQKQEQGQRQKREQGQRQKQEQGQKRKRERGG. Basic and acidic residues predominate over residues 198–220; sequence QKQEQGQRQKREQGQRQKQEQGQ.

Its subcellular location is the cytoplasm. The protein resides in the cytoskeleton. Functionally, microtubule-associated protein that may be involved in cross-linking microtubules. This is I/6 autoantigen from Trypanosoma brucei brucei.